The chain runs to 257 residues: Large ribosomal subunit protein uL2 (257 aa).

Positions 210–231 (PHGGGNHQHIGKASTVKRGTSA) are disordered.

The protein belongs to the universal ribosomal protein uL2 family.

The protein resides in the cytoplasm. This is Large ribosomal subunit protein uL2 (RpL8) from Mamestra brassicae (Cabbage moth).